A 294-amino-acid polypeptide reads, in one-letter code: Homeobox protein Nkx-2.5 (294 aa).

2 disordered regions span residues 48 to 69 (GSEP…PAAF) and 102 to 122 (EQEK…RRKP). Over residues 52 to 69 (PALPELPEPPPAKPPAAF) the composition is skewed to pro residues. Residues 102 to 114 (EQEKRELEDPERP) are compositionally biased toward basic and acidic residues. The segment at residues 119–178 (RRKPRVLFSQAQVYELERRFKQQKYLSAPERDHLANVLKLTSTQVKIWFQNRRYKCKRQR) is a DNA-binding region (homeobox).

It belongs to the NK-2 homeobox family. As to quaternary structure, homodimer (via the homeobox); binds DNA as homodimer.

The protein localises to the nucleus. In terms of biological role, transcription factor required for the development of the heart and the spleen. Implicated in commitment to and/or differentiation of the myocardial lineage. Binds to the core DNA motif of promoter. The protein is Homeobox protein Nkx-2.5 (NKX-2.5) of Gallus gallus (Chicken).